The sequence spans 465 residues: Uronate isomerase (465 aa).

The protein belongs to the metallo-dependent hydrolases superfamily. Uronate isomerase family.

It catalyses the reaction D-glucuronate = D-fructuronate. The enzyme catalyses aldehydo-D-galacturonate = keto-D-tagaturonate. It participates in carbohydrate metabolism; pentose and glucuronate interconversion. This Bacillus velezensis (strain DSM 23117 / BGSC 10A6 / LMG 26770 / FZB42) (Bacillus amyloliquefaciens subsp. plantarum) protein is Uronate isomerase.